A 293-amino-acid polypeptide reads, in one-letter code: 4-diphosphocytidyl-2-C-methyl-D-erythritol kinase (293 aa).

Lysine 10 is an active-site residue. Position 94-104 (94-104 (PVSAGLAGGSS)) interacts with ATP. Aspartate 136 is an active-site residue.

The protein belongs to the GHMP kinase family. IspE subfamily.

The catalysed reaction is 4-CDP-2-C-methyl-D-erythritol + ATP = 4-CDP-2-C-methyl-D-erythritol 2-phosphate + ADP + H(+). It functions in the pathway isoprenoid biosynthesis; isopentenyl diphosphate biosynthesis via DXP pathway; isopentenyl diphosphate from 1-deoxy-D-xylulose 5-phosphate: step 3/6. Its function is as follows. Catalyzes the phosphorylation of the position 2 hydroxy group of 4-diphosphocytidyl-2C-methyl-D-erythritol. This Listeria monocytogenes serovar 1/2a (strain ATCC BAA-679 / EGD-e) protein is 4-diphosphocytidyl-2-C-methyl-D-erythritol kinase.